Consider the following 283-residue polypeptide: Nucleoid occlusion protein (283 aa).

Positions 148-167 (EALAQRLGKGQSTIANKLRL) form a DNA-binding region, H-T-H motif.

Belongs to the ParB family.

The protein resides in the cytoplasm. Its subcellular location is the nucleoid. Effects nucleoid occlusion by binding relatively nonspecifically to DNA and preventing the assembly of the division machinery in the vicinity of the nucleoid, especially under conditions that disturb the cell cycle. It helps to coordinate cell division and chromosome segregation by preventing the formation of the Z ring through the nucleoid, which would cause chromosome breakage. The chain is Nucleoid occlusion protein (noc) from Bacillus subtilis (strain 168).